An 83-amino-acid chain; its full sequence is Cell division topological specificity factor (83 aa).

Belongs to the MinE family.

Functionally, prevents the cell division inhibition by proteins MinC and MinD at internal division sites while permitting inhibition at polar sites. This ensures cell division at the proper site by restricting the formation of a division septum at the midpoint of the long axis of the cell. In Deinococcus deserti (strain DSM 17065 / CIP 109153 / LMG 22923 / VCD115), this protein is Cell division topological specificity factor.